We begin with the raw amino-acid sequence, 74 residues long: MFTMKKSLLVLFFLGTISLSLCEEERNADEDDGEMTEEEKRGLLSTFKQVGISALQGAAQGLLNTLSCKIAKTC.

Residues 1–22 (MFTMKKSLLVLFFLGTISLSLC) form the signal peptide. Residues 23–39 (EEERNADEDDGEMTEEE) constitute a propeptide, removed in mature form. The cysteines at positions 68 and 74 are disulfide-linked.

Belongs to the frog skin active peptide (FSAP) family. Brevinin subfamily. Expressed by the skin glands.

Its subcellular location is the secreted. Its function is as follows. Antimicrobial peptide. Active against a variety of Gram-negative and Gram-positive bacterial strains. Active against fungi. Shows hemolytic activity against human erythrocytes. This is Brevinin-2MT1 from Amolops mantzorum (Sichuan torrent frog).